Consider the following 202-residue polypeptide: LexA repressor (202 aa).

The H-T-H motif DNA-binding region spans 28–48; it reads RAEIAMRLGFRSPNAAEEHLK. Catalysis depends on for autocatalytic cleavage activity residues Ser-119 and Lys-156.

Belongs to the peptidase S24 family. As to quaternary structure, homodimer.

It catalyses the reaction Hydrolysis of Ala-|-Gly bond in repressor LexA.. Represses a number of genes involved in the response to DNA damage (SOS response), including recA and lexA. Binds to the 16 bp palindromic sequence 5'-CTGTATATATATACAG-3'. In the presence of single-stranded DNA, RecA interacts with LexA causing an autocatalytic cleavage which disrupts the DNA-binding part of LexA, leading to derepression of the SOS regulon and eventually DNA repair. The sequence is that of LexA repressor from Serratia proteamaculans (strain 568).